We begin with the raw amino-acid sequence, 72 residues long: DNA-directed RNA polymerase subunit omega (72 aa).

It belongs to the RNA polymerase subunit omega family. As to quaternary structure, the RNAP catalytic core consists of 2 alpha, 1 beta, 1 beta' and 1 omega subunit. When a sigma factor is associated with the core the holoenzyme is formed, which can initiate transcription.

It catalyses the reaction RNA(n) + a ribonucleoside 5'-triphosphate = RNA(n+1) + diphosphate. Functionally, promotes RNA polymerase assembly. Latches the N- and C-terminal regions of the beta' subunit thereby facilitating its interaction with the beta and alpha subunits. The sequence is that of DNA-directed RNA polymerase subunit omega from Clostridium beijerinckii (strain ATCC 51743 / NCIMB 8052) (Clostridium acetobutylicum).